A 346-amino-acid polypeptide reads, in one-letter code: Holliday junction branch migration complex subunit RuvB (346 aa).

Residues 1–181 are large ATPase domain (RuvB-L); the sequence is MSDRNPLIDA…FGIPTRLNFY (181 aa). ATP is bound by residues Leu-20, Arg-21, Gly-62, Lys-65, Thr-66, Thr-67, 128-130, Arg-171, Tyr-181, and Arg-218; that span reads EDF. Thr-66 contributes to the Mg(2+) binding site. The segment at 182–252 is small ATPAse domain (RuvB-S); it reads TVEELEYIVR…IADEALSRLE (71 aa). Positions 255-346 are head domain (RuvB-H); that stretch reads NRGLDQLDRR…SQYGLFMEDE (92 aa). DNA-binding residues include Arg-291, Arg-310, and Arg-315.

Belongs to the RuvB family. As to quaternary structure, homohexamer. Forms an RuvA(8)-RuvB(12)-Holliday junction (HJ) complex. HJ DNA is sandwiched between 2 RuvA tetramers; dsDNA enters through RuvA and exits via RuvB. An RuvB hexamer assembles on each DNA strand where it exits the tetramer. Each RuvB hexamer is contacted by two RuvA subunits (via domain III) on 2 adjacent RuvB subunits; this complex drives branch migration. In the full resolvosome a probable DNA-RuvA(4)-RuvB(12)-RuvC(2) complex forms which resolves the HJ.

The protein resides in the cytoplasm. It catalyses the reaction ATP + H2O = ADP + phosphate + H(+). The RuvA-RuvB-RuvC complex processes Holliday junction (HJ) DNA during genetic recombination and DNA repair, while the RuvA-RuvB complex plays an important role in the rescue of blocked DNA replication forks via replication fork reversal (RFR). RuvA specifically binds to HJ cruciform DNA, conferring on it an open structure. The RuvB hexamer acts as an ATP-dependent pump, pulling dsDNA into and through the RuvAB complex. RuvB forms 2 homohexamers on either side of HJ DNA bound by 1 or 2 RuvA tetramers; 4 subunits per hexamer contact DNA at a time. Coordinated motions by a converter formed by DNA-disengaged RuvB subunits stimulates ATP hydrolysis and nucleotide exchange. Immobilization of the converter enables RuvB to convert the ATP-contained energy into a lever motion, pulling 2 nucleotides of DNA out of the RuvA tetramer per ATP hydrolyzed, thus driving DNA branch migration. The RuvB motors rotate together with the DNA substrate, which together with the progressing nucleotide cycle form the mechanistic basis for DNA recombination by continuous HJ branch migration. Branch migration allows RuvC to scan DNA until it finds its consensus sequence, where it cleaves and resolves cruciform DNA. The sequence is that of Holliday junction branch migration complex subunit RuvB from Brucella anthropi (strain ATCC 49188 / DSM 6882 / CCUG 24695 / JCM 21032 / LMG 3331 / NBRC 15819 / NCTC 12168 / Alc 37) (Ochrobactrum anthropi).